The chain runs to 430 residues: Multisubstrate adapter protein soc-1 (430 aa).

The region spanning 7-133 (NIILEGSLKR…WVNEICKLCK (127 aa)) is the PH domain. Positions 192–222 (SHNSLPSNPNYNNLPDPLESSRSETSSMYSS) are enriched in low complexity. 3 disordered regions span residues 192–246 (SHNS…TRHT), 275–303 (EDAE…SEGF), and 315–377 (RRAP…RNLD). Polar residues predominate over residues 341–369 (RNLSRNGVNENGNYSATFSSRTSNYQQSE).

In terms of assembly, interacts (via C-terminus) with sem-5 (probably via SH3 domain 2). Interacts with nicotinic acetylcholine receptor. Post-translationally, may be phosphorylated.

Functionally, adapter protein which modulates signaling mediated by several receptor tyrosine kinases. Plays a role in fluid homeostasis, probably downstream of receptor egl-15 and upstream of let-60/Ras. Involved in nicotinic acetylcholine receptor (nAChR)-mediated sensitivity to nicotine and levamisole and gamma-aminobutyric acid (GABA)receptor-mediated sensitivity to muscimol. Regulates synaptic levels of nAchR receptor subunit lev-1 and unc-38, and GABA receptor subunit unc-49 in the nerve cord, probably downstream of egl-15. Regulates motility. During the formation of neuromuscular junctions at the larval stage, down-regulates membrane protrusion from body wall muscles, probably downstream of egl-15. Promotes vulva induction and down-regulates fertility, probably downstream of receptor let-23. Down-regulates daf-2-mediated repression of dauer formation and positively regulates daf-2-mediated aging. May be involved in the recruitment of phosphatase ptp-2 to egl-15. In Caenorhabditis elegans, this protein is Multisubstrate adapter protein soc-1.